The primary structure comprises 157 residues: Protein Smg homolog (157 aa).

The protein belongs to the Smg family.

The sequence is that of Protein Smg homolog from Shewanella halifaxensis (strain HAW-EB4).